The following is a 949-amino-acid chain: Glycine dehydrogenase (decarboxylating) (949 aa).

Lysine 700 carries the N6-(pyridoxal phosphate)lysine modification.

This sequence belongs to the GcvP family. As to quaternary structure, the glycine cleavage system is composed of four proteins: P, T, L and H. It depends on pyridoxal 5'-phosphate as a cofactor.

The catalysed reaction is N(6)-[(R)-lipoyl]-L-lysyl-[glycine-cleavage complex H protein] + glycine + H(+) = N(6)-[(R)-S(8)-aminomethyldihydrolipoyl]-L-lysyl-[glycine-cleavage complex H protein] + CO2. In terms of biological role, the glycine cleavage system catalyzes the degradation of glycine. The P protein binds the alpha-amino group of glycine through its pyridoxal phosphate cofactor; CO(2) is released and the remaining methylamine moiety is then transferred to the lipoamide cofactor of the H protein. The chain is Glycine dehydrogenase (decarboxylating) from Flavobacterium johnsoniae (strain ATCC 17061 / DSM 2064 / JCM 8514 / BCRC 14874 / CCUG 350202 / NBRC 14942 / NCIMB 11054 / UW101) (Cytophaga johnsonae).